The chain runs to 292 residues: Chondroitin proteoglycan 3 (292 aa).

The first 17 residues, 1–17 (MRFVFIIALLLIGASLA), serve as a signal peptide directing secretion. The segment at 28–103 (DVSASEDEFS…EGSGDTSPVV (76 aa)) is disordered. Low complexity predominate over residues 38 to 80 (GDSSGEISGESSGEASGEASGEASGEASGEASGESSGETSGES). The segment covering 81-96 (SGDEETSGEGSGEEGS) has biased composition (acidic residues). Residues asparagine 174 and asparagine 254 are each glycosylated (N-linked (GlcNAc...) asparagine).

The protein is Chondroitin proteoglycan 3 of Caenorhabditis elegans.